Here is a 342-residue protein sequence, read N- to C-terminus: Endoplasmic reticulum junction formation protein lunapark-1 (342 aa).

Topologically, residues 1 to 39 (MGNLFSRNKSPATELERVALSIDDLKKRLQTISSSNTNT) are cytoplasmic. Residues 13–34 (TELERVALSIDDLKKRLQTISS) adopt a coiled-coil conformation. The helical transmembrane segment at 40–60 (LYYYYMSIVVILSIAMAHTWL) threads the bilayer. At 61–68 (RFEDPQKT) the chain is on the lumenal side. Residues 69–89 (YVACALMLGAIGIVLAGRYVI) traverse the membrane as a helical segment. The Cytoplasmic segment spans residues 90–342 (NGFFSWRTNR…ESKTMETEFH (253 aa)). Residues 102 to 136 (QKLENAISQKTTLLDLVKETLKFKEAKEILDRYEK) are a coiled coil. The tract at residues 161-191 (ADSSMFATPKQEQKRVETPTAQGPNSAMNSM) is disordered. The span at 179–191 (PTAQGPNSAMNSM) shows a compositional bias: polar residues. The segment at 236-261 (CSICHTHNGMSTPAEYPYISFRCFEC) adopts a C4-type; plays a role in ER morphology zinc-finger fold. The segment at 278-342 (RPPMGPKGIQ…ESKTMETEFH (65 aa)) is disordered. The segment covering 295–321 (SENTHNMMENQKPSTDLTPSASQNGSE) has biased composition (polar residues). Residues 322-342 (KGSDSENEKVPESKTMETEFH) show a composition bias toward basic and acidic residues.

It belongs to the lunapark family. As to expression, expressed in cell bodies along the ventral cord around the pharynx and the tail both in larvae and adults. Also expressed in muscles and hypodermal cells.

The protein localises to the endoplasmic reticulum membrane. Functionally, plays a role in tubular endoplasmic reticulum network formation and maintenance. May be involved in central nervous system development. Has a presynaptic role in neurotransmission. Likely to operate in synaptogenesis by regulating vesicular transport or localization. Required for correct localization of rab-3 and snb-1. This Caenorhabditis elegans protein is Endoplasmic reticulum junction formation protein lunapark-1 (lnp-1).